The sequence spans 700 residues: Elongation factor G (700 aa).

Residues 10–285 enclose the tr-type G domain; it reads DRTRNIGIMA…AVIDYLPSPL (276 aa). GTP is bound by residues 19 to 26, 83 to 87, and 137 to 140; these read AHIDAGKT, DTPGH, and NKMD.

It belongs to the TRAFAC class translation factor GTPase superfamily. Classic translation factor GTPase family. EF-G/EF-2 subfamily.

The protein localises to the cytoplasm. In terms of biological role, catalyzes the GTP-dependent ribosomal translocation step during translation elongation. During this step, the ribosome changes from the pre-translocational (PRE) to the post-translocational (POST) state as the newly formed A-site-bound peptidyl-tRNA and P-site-bound deacylated tRNA move to the P and E sites, respectively. Catalyzes the coordinated movement of the two tRNA molecules, the mRNA and conformational changes in the ribosome. The chain is Elongation factor G from Lacticaseibacillus casei (strain BL23) (Lactobacillus casei).